Here is a 353-residue protein sequence, read N- to C-terminus: 3-isopropylmalate dehydrogenase (353 aa).

Position 75-88 (75-88 (GPKWENLPHEHKPE)) interacts with NAD(+). Substrate-binding residues include arginine 95, arginine 105, arginine 133, and aspartate 219. Residues aspartate 219, aspartate 243, and aspartate 247 each coordinate Mg(2+). 276 to 288 (GSAPDIAGKNIAN) is a binding site for NAD(+).

The protein belongs to the isocitrate and isopropylmalate dehydrogenases family. LeuB type 1 subfamily. In terms of assembly, homodimer. Mg(2+) is required as a cofactor. Requires Mn(2+) as cofactor.

It localises to the cytoplasm. It catalyses the reaction (2R,3S)-3-isopropylmalate + NAD(+) = 4-methyl-2-oxopentanoate + CO2 + NADH. It participates in amino-acid biosynthesis; L-leucine biosynthesis; L-leucine from 3-methyl-2-oxobutanoate: step 3/4. In terms of biological role, catalyzes the oxidation of 3-carboxy-2-hydroxy-4-methylpentanoate (3-isopropylmalate) to 3-carboxy-4-methyl-2-oxopentanoate. The product decarboxylates to 4-methyl-2 oxopentanoate. The polypeptide is 3-isopropylmalate dehydrogenase (Chlorobium luteolum (strain DSM 273 / BCRC 81028 / 2530) (Pelodictyon luteolum)).